The primary structure comprises 514 residues: Type-2 serine--tRNA ligase (514 aa).

Ala-313 contacts L-serine. Cys-315 contributes to the Zn(2+) binding site. Position 344 (Arg-344) interacts with L-serine. ATP is bound by residues 344-346 (RWE) and 355-356 (RV). Position 361-363 (361-363 (RGE)) interacts with L-serine. Residues Glu-363 and Cys-470 each coordinate Zn(2+). An ATP-binding site is contributed by Arg-477.

The protein belongs to the class-II aminoacyl-tRNA synthetase family. Type-2 seryl-tRNA synthetase subfamily. Homodimer. The cofactor is Zn(2+).

It is found in the cytoplasm. It carries out the reaction tRNA(Ser) + L-serine + ATP = L-seryl-tRNA(Ser) + AMP + diphosphate + H(+). The enzyme catalyses tRNA(Sec) + L-serine + ATP = L-seryl-tRNA(Sec) + AMP + diphosphate + H(+). The protein operates within aminoacyl-tRNA biosynthesis; selenocysteinyl-tRNA(Sec) biosynthesis; L-seryl-tRNA(Sec) from L-serine and tRNA(Sec): step 1/1. In terms of biological role, catalyzes the attachment of serine to tRNA(Ser). Is also able to aminoacylate tRNA(Sec) with serine, to form the misacylated tRNA L-seryl-tRNA(Sec), which will be further converted into selenocysteinyl-tRNA(Sec). The protein is Type-2 serine--tRNA ligase of Methanococcus maripaludis (strain C6 / ATCC BAA-1332).